Consider the following 430-residue polypeptide: Protein translocase subunit SecY (430 aa).

The next 10 membrane-spanning stretches (helical) occupy residues 18–38 (IFFT…PAPG), 68–88 (FSIF…MQLL), 117–137 (LAIS…NNYL), 147–167 (IMSY…LIWL), 179–199 (GISI…LIQF), 217–237 (VLGL…VLEA), 269–289 (GVIP…LTLF), 308–328 (NVGM…YAFV), 368–388 (FVGS…TKFM), and 389–409 (GLPQ…GVAI).

The protein belongs to the SecY/SEC61-alpha family. Component of the Sec protein translocase complex. Heterotrimer consisting of SecY, SecE and SecG subunits. The heterotrimers can form oligomers, although 1 heterotrimer is thought to be able to translocate proteins. Interacts with the ribosome. Interacts with SecDF, and other proteins may be involved. Interacts with SecA.

It is found in the cell membrane. Its function is as follows. The central subunit of the protein translocation channel SecYEG. Consists of two halves formed by TMs 1-5 and 6-10. These two domains form a lateral gate at the front which open onto the bilayer between TMs 2 and 7, and are clamped together by SecE at the back. The channel is closed by both a pore ring composed of hydrophobic SecY resides and a short helix (helix 2A) on the extracellular side of the membrane which forms a plug. The plug probably moves laterally to allow the channel to open. The ring and the pore may move independently. The sequence is that of Protein translocase subunit SecY from Staphylococcus aureus (strain NCTC 8325 / PS 47).